The chain runs to 86 residues: Small ribosomal subunit protein bS20 (86 aa).

The interval 1–25 (MANIKSQQKRNKTNERARLRNKSVK) is disordered.

The protein belongs to the bacterial ribosomal protein bS20 family.

Binds directly to 16S ribosomal RNA. The chain is Small ribosomal subunit protein bS20 from Mycobacterium avium (strain 104).